We begin with the raw amino-acid sequence, 294 residues long: Probable WRKY transcription factor 70 (294 aa).

The interval 72-94 (SQNASCDNDGKFEDSGDSRKRLG) is disordered. Residues 79 to 91 (NDGKFEDSGDSRK) show a composition bias toward basic and acidic residues. A Nuclear localization signal motif is present at residues 90-97 (RKRLGPVK). The segment at residues 114-182 (IESTILEDAF…YIGNHTCNTN (69 aa)) is a DNA-binding region (WRKY). Residues 201 to 229 (SEDHKSPSLSTSMKEEDNPHRHHGSSTEN) are disordered.

It belongs to the WRKY group III family. Interacts with WRKY30. Binds to BZR2/BES1 to cooperatively regulate the expression of target genes. Binds to unmodified (i.e. not sumoylated) NPR1. Phosphorylated and destabilized by ASK7/BIN2. As to expression, expressed in leaves and flowers.

The protein resides in the nucleus. In terms of biological role, transcription factor involved in senescence, biotic and abiotic stress responses by modulating various phytohormones signaling pathways. Interacts specifically with the W box (5'-(T)TGAC[CT]-3'), a frequently occurring elicitor-responsive cis-acting element. Binds to the 5'-[CT]GACTTTT-3' motif in promoters of target genes to induce their expression. Binding to the W-box element of PR-1 promoter is mediated by not-sumoylated NPR1 in the absence of salicylic acid. Plays an important but not indispensable role in jasmonate and salicylic acid signaling. Positively regulates the salicylic acid (SA)-mediated signal pathway, but negatively the jasmonic acid (JA)-mediated signal pathway, thus determining the balance between these mutually antagonistic pathways. Together with WRKY46, WRKY53 and WRKY54, prevents defense response to the necrotrophic pathogens P.carotovorum and B.cinerea, but promotes defense responses (including SA-induced pathogenesis-related (PR) genes expression) against biotrophic/hemibiotrophic SA-monitored pathogens (e.g. P.syringae, E.carotovora subsp. carotovora SCC3193 and E.cichoracearum), probably by regulating negatively the JA/ET and positively the SA signaling pathways. Contributes to the suppression of jasmonic acid (MeJA)-induced expression of JA-responsive genes (e.g. PDF1.2). Promotes susceptibility to JA-monitored pathogens (e.g. A.brassicicola), probably by facilitating SA-controlled suppression of JA-mediated defense. Represses the biosynthesis of the phytoalexin camalexin and indol-3-ylmethyl glucosinolate (IGS). Represses both SA and JA/ethylene (ET) mediated defense marker genes expression. Negative regulator of SA biosynthesis. Negative regulator of EDS1-dependent defense against E.amylovora. Required for RPP4-mediated disease resistance and basal defense against H.parasitica, probably via late up-regulation (LURP) of resistance genes (e.g. CML10/CaBP22 and LURP1). Probably involved in defense responses toward insects (e.g. P.xylostella and B.brassicae). Together with WRKY54, negative regulator of developmental senescence, probably via the regulation of several senescence-associated markers genes. Together with WRKY46 and WRKY54, promotes brassinosteroid (BR)-regulated plant growth but prevent drought response by modulating gene expression. In collaboration with WRKY54, prevents stomatal closure and, consequently, osmotic stress tolerance. Regulates rhizobacterium B.cereus AR156-induced systemic resistance (ISR) to P.syringae pv. tomato DC3000. The chain is Probable WRKY transcription factor 70 from Arabidopsis thaliana (Mouse-ear cress).